Here is an 86-residue protein sequence, read N- to C-terminus: Large ribosomal subunit protein bL31 (86 aa).

The tract at residues 66-86 (GMGSADSATSQETKEAKESDK) is disordered. The segment covering 77–86 (ETKEAKESDK) has biased composition (basic and acidic residues).

This sequence belongs to the bacterial ribosomal protein bL31 family. Type A subfamily. In terms of assembly, part of the 50S ribosomal subunit.

In terms of biological role, binds the 23S rRNA. The protein is Large ribosomal subunit protein bL31 of Prochlorococcus marinus (strain MIT 9515).